A 628-amino-acid chain; its full sequence is MERDGCFGNCWLRRWEKSDMNRKGFGGHRDAKQLSRTKNRFARLDPDTQSRYEDDDEPAVPVRASLTSASSRGRGGSSRGFGQSAASIANTGVRNADIVYKCRATGAAKKVDAKWLIKQLNQIIENFKPLLWTDNARGDFEWYVRDEDTASTIRANNRRVVHKESGTRVEFYTSKVPAPWMKLKREEIEIIHRVVDKRHNAENRVLDLSNFHEDEEFKAKDMMMNLTKGNVMLTVLDHIDDKYGNIVALSLSNNRIRHLDYASALVSIAKFVMELDLSHNHISTEKELEKFAGLPVERFFFEGNPVVESFTQRAAYISYIHQSFPRCNMLDGVEVQPLVVGPDLDIHDAMPFRAGYYPNPQIRVLVEQFVTSYFDFYDGPDGQRTRRNLHNAYDADASTFSLTIEHLRGSSHARHHNDECFAQYAGVSHNVLKQERFARHRASRSARGAMDIAVALSKLPTSSHMRDTFIVDVFLQSNDLLGFTVQGLFCDGDLTQTPSPSFFSRSFLVSPRENDSVAVISDQLFITVASLDRLEKFKKLYDQSIANGAAVEQVSAVQIAQIGVNGMGFDGAPALPIREEMIKAMCQFSGMIPPFSEKCLADCAWNFDFACQKFNEIKSSVPAEAFAH.

The tract at residues 47 to 83 (DTQSRYEDDDEPAVPVRASLTSASSRGRGGSSRGFGQ) is disordered. A compositionally biased stretch (low complexity) spans 63–72 (RASLTSASSR). The RRM domain maps to 100–179 (YKCRATGAAK…EFYTSKVPAP (80 aa)). LRR repeat units follow at residues 245 to 270 (NIVALSLSNNRIRHLDYASALVSIAK) and 271 to 294 (FVMELDLSHNHISTEKELEKFAGL). Residues 365-526 (LVEQFVTSYF…VAVISDQLFI (162 aa)) form the NTF2 domain. Residues 576–628 (PIREEMIKAMCQFSGMIPPFSEKCLADCAWNFDFACQKFNEIKSSVPAEAFAH) enclose the TAP-C domain.

Belongs to the NXF family. Interacts with nucleoporins, Nup98, Nup153 and Nup214.

The protein resides in the nucleus. Functionally, involved in RNA export from the nucleus to the cytoplasm. This Caenorhabditis elegans protein is Nuclear RNA export factor 1 (nxf-1).